Here is a 548-residue protein sequence, read N- to C-terminus: WEB family protein At1g12150 (548 aa).

Residues 71 to 544 (KEFMKIKQKL…ELQRWRQQEN (474 aa)) are a coiled coil. Positions 430-448 (VREEMKMISQKQESKKQDE) are enriched in basic and acidic residues. The disordered stretch occupies residues 430 to 455 (VREEMKMISQKQESKKQDEESSGSKI).

Belongs to the WEB family.

This Arabidopsis thaliana (Mouse-ear cress) protein is WEB family protein At1g12150.